A 309-amino-acid polypeptide reads, in one-letter code: 2-dehydro-3-deoxygluconokinase (309 aa).

Residues 28-32 (GDTLN), Y88, 102-104 (YWR), and R170 contribute to the substrate site. ATP-binding positions include 168 to 170 (NYR), 228 to 233 (KRGADS), and 261 to 264 (AAGD). D264 serves as a coordination point for substrate. D264 functions as the Proton acceptor in the catalytic mechanism.

This sequence belongs to the carbohydrate kinase pfkB family.

It carries out the reaction 2-dehydro-3-deoxy-D-gluconate + ATP = 2-dehydro-3-deoxy-6-phospho-D-gluconate + ADP + H(+). Its pathway is carbohydrate acid metabolism; 2-dehydro-3-deoxy-D-gluconate degradation; D-glyceraldehyde 3-phosphate and pyruvate from 2-dehydro-3-deoxy-D-gluconate: step 1/2. Catalyzes the phosphorylation of 2-keto-3-deoxygluconate (KDG) to produce 2-keto-3-deoxy-6-phosphogluconate (KDPG). The protein is 2-dehydro-3-deoxygluconokinase (kdgK) of Escherichia coli (strain ATCC 9637 / CCM 2024 / DSM 1116 / LMG 11080 / NBRC 13500 / NCIMB 8666 / NRRL B-766 / W).